The primary structure comprises 476 residues: Acyl-lipid omega-13 desaturase (476 aa).

One can recognise a Cytochrome b5 heme-binding domain in the interval G10 to V75. Positions 37 and 60 each coordinate heme. 2 helical membrane passes run P146–W166 and G168–V188. Residues H189–H193 carry the Histidine box-1 motif. Residues H224–H229 carry the Histidine box-2 motif. Transmembrane regions (helical) follow at residues F267–L287, Y315–L335, and L343–V363. A Histidine box-3 motif is present at residues Q410–H414.

This sequence belongs to the fatty acid desaturase type 1 family.

The protein localises to the membrane. It carries out the reaction a (9Z,12Z)-octadecadienoyl-containing glycerolipid + 2 Fe(II)-[cytochrome b5] + O2 + 2 H(+) = a (5Z,9Z,12Z)-octadecatrienoyl-containing glycerolipid + 2 Fe(III)-[cytochrome b5] + 2 H2O. The catalysed reaction is (9Z,12Z,15Z)-octadecatrienoyl-containing glycerolipid + 2 Fe(II)-[cytochrome b5] + O2 + 2 H(+) = a (5Z,9Z,12Z,15Z)-octadecatetraenoyl-containing glycerolipid + 2 Fe(III)-[cytochrome b5] + 2 H2O. It functions in the pathway lipid metabolism; polyunsaturated fatty acid biosynthesis. In terms of biological role, front-end desaturase having a omega-13 desaturase activity for omega-9 unsaturated C18/C20 fatty acids. Strong substrate preferences for linoleic acid and alpha-linolenic acid for the production of pinolenic and coniferonic acids respectively. No desaturase activity for dihomo gamma-linolenic acid and eicosatertraenoic acid. This is Acyl-lipid omega-13 desaturase from Chlamydomonas reinhardtii (Chlamydomonas smithii).